The sequence spans 150 residues: uncharacterized protein (150 aa).

The Rhodanese domain maps to 19–93 (GAQDYVLVDV…SSKRLALRES (75 aa)).

This is an uncharacterized protein from Synechococcus elongatus.